Here is a 308-residue protein sequence, read N- to C-terminus: tRNA dimethylallyltransferase (308 aa).

14–21 lines the ATP pocket; the sequence is GPTASGKT. Substrate is bound at residue 16–21; it reads TASGKT. Interaction with substrate tRNA regions lie at residues 39-42, 163-167, and 244-249; these read DSAL, QRLSR, and RCVGYR.

The protein belongs to the IPP transferase family. As to quaternary structure, monomer. Requires Mg(2+) as cofactor.

The catalysed reaction is adenosine(37) in tRNA + dimethylallyl diphosphate = N(6)-dimethylallyladenosine(37) in tRNA + diphosphate. Catalyzes the transfer of a dimethylallyl group onto the adenine at position 37 in tRNAs that read codons beginning with uridine, leading to the formation of N6-(dimethylallyl)adenosine (i(6)A). The protein is tRNA dimethylallyltransferase of Shewanella baltica (strain OS223).